Here is a 638-residue protein sequence, read N- to C-terminus: Threonine--tRNA ligase (638 aa).

A TGS domain is found at Met-1–Thr-61. The segment at Asp-242 to Pro-533 is catalytic. Zn(2+)-binding residues include Cys-333, His-384, and His-510.

It belongs to the class-II aminoacyl-tRNA synthetase family. In terms of assembly, homodimer. Zn(2+) serves as cofactor.

It is found in the cytoplasm. The enzyme catalyses tRNA(Thr) + L-threonine + ATP = L-threonyl-tRNA(Thr) + AMP + diphosphate + H(+). In terms of biological role, catalyzes the attachment of threonine to tRNA(Thr) in a two-step reaction: L-threonine is first activated by ATP to form Thr-AMP and then transferred to the acceptor end of tRNA(Thr). Also edits incorrectly charged L-seryl-tRNA(Thr). The sequence is that of Threonine--tRNA ligase from Prochlorococcus marinus (strain MIT 9301).